Here is a 425-residue protein sequence, read N- to C-terminus: Tyrosine--tRNA ligase (425 aa).

Residue Y37 participates in L-tyrosine binding. A 'HIGH' region motif is present at residues 42 to 51 (PTADSLHLGH). Residues Y175 and Q179 each contribute to the L-tyrosine site. The 'KMSKS' region motif lies at 235 to 239 (KFGKT). K238 contributes to the ATP binding site. The region spanning 357 to 414 (ADLQQALVSAELVPSRGQARTMISSNAVTINGEKQADPEYTFSASDRLFDRYTLLRRG) is the S4 RNA-binding domain.

The protein belongs to the class-I aminoacyl-tRNA synthetase family. TyrS type 1 subfamily. Homodimer.

The protein resides in the cytoplasm. It carries out the reaction tRNA(Tyr) + L-tyrosine + ATP = L-tyrosyl-tRNA(Tyr) + AMP + diphosphate + H(+). Its function is as follows. Catalyzes the attachment of tyrosine to tRNA(Tyr) in a two-step reaction: tyrosine is first activated by ATP to form Tyr-AMP and then transferred to the acceptor end of tRNA(Tyr). The protein is Tyrosine--tRNA ligase of Pectobacterium carotovorum subsp. carotovorum (strain PC1).